Here is a 349-residue protein sequence, read N- to C-terminus: Fe(3+) ions import ATP-binding protein FbpC (349 aa).

An ABC transporter domain is found at 4–236; it reads LELHHIGKSY…PVDEPTATFL (233 aa). Residue 36–43 coordinates ATP; it reads GPSGSGKT.

This sequence belongs to the ABC transporter superfamily. Fe(3+) ion importer (TC 3.A.1.10) family. As to quaternary structure, the complex is composed of two ATP-binding proteins (FbpC), two transmembrane proteins (FbpB) and a solute-binding protein (FbpA).

The protein localises to the cell inner membrane. The catalysed reaction is Fe(3+)(out) + ATP + H2O = Fe(3+)(in) + ADP + phosphate + H(+). Its function is as follows. Part of the ABC transporter complex FbpABC involved in Fe(3+) ions import. Responsible for energy coupling to the transport system. The protein is Fe(3+) ions import ATP-binding protein FbpC of Yersinia pestis bv. Antiqua (strain Antiqua).